We begin with the raw amino-acid sequence, 211 residues long: Agamous-like MADS-box protein AGL12 (211 aa).

The region spanning 3-57 is the MADS-box domain; sequence RGKIQLKRIENPVHRQVTFCKRRTGLLKKAKELSVLCDAEIGVVIFSPQGKLFEL. The region spanning 95-185 is the K-box domain; sequence NLDPKDEINV…LEKIEENNNS (91 aa).

As to expression, preferentially expressed in roots. In root meristem, expressed in external cells of columella, lateral root cap and atrichoblasts. In mature root, expressed in the central cylinder. Expressed in leaf vasculature, young floral meristems and nectaries.

The protein localises to the nucleus. In terms of biological role, probable transcription activator that regulates root development by controlling cell proliferation in root meristem. May mediate responses to auxin in the root. May act as promoter of the flowering transition through up-regulation of SOC, FT and LFY. The polypeptide is Agamous-like MADS-box protein AGL12 (Arabidopsis thaliana (Mouse-ear cress)).